Here is a 912-residue protein sequence, read N- to C-terminus: DNA ligase 4 (912 aa).

Positions 271, 272, 273, 274, 278, 331, 345, 367, 427, 432, 449, and 451 each coordinate ATP. The N6-AMP-lysine intermediate role is filled by Lys-273. Glu-331 lines the Mg(2+) pocket. Glu-427 lines the Mg(2+) pocket. The segment at 610 to 620 (LATKHLHVGDD) is required for catalytic activity. BRCT domains follow at residues 654-743 (KVSN…PRFM) and 846-912 (LRFH…QYLL).

The protein belongs to the ATP-dependent DNA ligase family. In terms of assembly, interacts with XRCC4; the LIG4-XRCC4 subcomplex has a 1:2 stoichiometry and XRCC4 is required for LIG4 stability. Component of the core long-range non-homologous end joining (NHEJ) complex (also named DNA-PK complex) composed of PRKDC, LIG4, XRCC4, XRCC6/Ku70, XRCC5/Ku86 and NHEJ1/XLF. Additional component of the NHEJ complex includes PAXX. Following autophosphorylation, PRKDC dissociates from DNA, leading to formation of the short-range NHEJ complex, composed of LIG4, XRCC4, XRCC6/Ku70, XRCC5/Ku86 and NHEJ1/XLF. Interacts with DCLRE1C; the interaction is direct. Interacts with APLF. Mg(2+) serves as cofactor.

It localises to the nucleus. The enzyme catalyses ATP + (deoxyribonucleotide)n-3'-hydroxyl + 5'-phospho-(deoxyribonucleotide)m = (deoxyribonucleotide)n+m + AMP + diphosphate.. In terms of biological role, DNA ligase involved in DNA non-homologous end joining (NHEJ); required for double-strand break (DSB) repair and V(D)J recombination. Catalyzes the NHEJ ligation step of the broken DNA during DSB repair by resealing the DNA breaks after the gap filling is completed. Joins single-strand breaks in a double-stranded polydeoxynucleotide in an ATP-dependent reaction. LIG4 is mechanistically flexible: it can ligate nicks as well as compatible DNA overhangs alone, while in the presence of XRCC4, it can ligate ends with 2-nucleotides (nt) microhomology and 1-nt gaps. Forms a subcomplex with XRCC4; the LIG4-XRCC4 subcomplex is responsible for the NHEJ ligation step and XRCC4 enhances the joining activity of LIG4. Binding of the LIG4-XRCC4 complex to DNA ends is dependent on the assembly of the DNA-dependent protein kinase complex DNA-PK to these DNA ends. LIG4 regulates nuclear localization of XRCC4. In Cricetulus griseus (Chinese hamster), this protein is DNA ligase 4.